Here is a 1076-residue protein sequence, read N- to C-terminus: Nucleoporin NUP1 (1076 aa).

Positions 1-11 (MSSNTSSVMSS) are enriched in low complexity. The tract at residues 1-39 (MSSNTSSVMSSPRVEKRSFSSTLKSFFTNPNKKRPSSKK) is disordered. Ser-2 carries the post-translational modification N-acetylserine. Over residues 19-30 (FSSTLKSFFTNP) the composition is skewed to polar residues. Residues Ser-54 and Ser-161 each carry the phosphoserine modification. Disordered stretches follow at residues 143–183 (SQSK…TNVG) and 224–260 (KKDN…ATGP). Composition is skewed to polar residues over residues 154–170 (LCTS…SCTR) and 243–260 (NRNN…ATGP). Residues 336-338 (FDF) form an FXF 1 repeat. Position 381 is a phosphothreonine (Thr-381). Ser-383 bears the Phosphoserine mark. An FXF 2 repeat occupies 384–386 (FNF). The interval 403-518 (TTLFNFGGKS…SFVFGASDKQ (116 aa)) is disordered. FXFG repeat units lie at residues 406-409 (FNFG) and 422-425 (FKFG). The segment covering 426-439 (KTSEKSENHTESDA) has biased composition (basic and acidic residues). FXFG repeat units follow at residues 448–451 (FSFG) and 484–487 (FDFG). Over residues 488 to 505 (KTGDQKETKKGESEKDAS) the composition is skewed to basic and acidic residues. 4 FXFG repeats span residues 510–513 (FVFG), 525–528 (FTFG), 543–546 (FTFG), and 571–574 (FTFG). The disordered stretch occupies residues 548 to 743 (AATAKETHTK…SMKSTASTAA (196 aa)). 4 FXF repeats span residues 591 to 593 (FSF), 614 to 616 (FSF), 636 to 638 (FSF), and 657 to 659 (FTF). Polar residues-rich tracts occupy residues 634-649 (PTFS…SSVV) and 658-667 (TFASSKTSQP). Ser-637 bears the Phosphoserine mark. One copy of the FXFG 9 repeat lies at 671–674 (FSFG). Residues 689-691 (FSF) form an FXF 7 repeat. FXFG repeat units follow at residues 708 to 711 (FTFG) and 727 to 730 (FSFG). Residues 708-723 (FTFGGSTTNNTTTTST) are compositionally biased toward low complexity. The FXF 8 repeat unit spans residues 753–755 (FSF). An FXFG 12 repeat occupies 800-803 (FSFG). 2 FXF repeats span residues 819–821 (FSF) and 866–868 (FGF). An FXFG 13 repeat occupies 885–888 (FNFG). One copy of the FXF 11 repeat lies at 929 to 931 (FNF). Positions 940–979 (GGSVFNMNGNTNANTVFAGSNNQPHQSQTPSFNTNSSFTP) are disordered. Over residues 944 to 964 (FNMNGNTNANTVFAGSNNQPH) the composition is skewed to polar residues. Positions 965–979 (QSQTPSFNTNSSFTP) are enriched in low complexity. FG repeat units lie at residues 1008–1009 (FG), 1027–1028 (FG), and 1038–1039 (FG). The tract at residues 1025–1054 (SIFGGAGGVPTTSFGQPQSAPNQMGMGTNN) is disordered. Polar residues predominate over residues 1034–1045 (PTTSFGQPQSAP). The interval 1040 to 1076 (QPQSAPNQMGMGTNNGMSMGGGVMANRKIARMRHSKR) is interaction with KAP95.

As to quaternary structure, component of the nuclear pore complex (NPC). NPC constitutes the exclusive means of nucleocytoplasmic transport. NPCs allow the passive diffusion of ions and small molecules and the active, nuclear transport receptor-mediated bidirectional transport of macromolecules such as proteins, RNAs, ribonucleoparticles (RNPs), and ribosomal subunits across the nuclear envelope. Due to its 8-fold rotational symmetry, all subunits are present with 8 copies or multiples thereof. Interacts through its FG repeats with nuclear transport receptors. Binds to the nuclear basket of the NPC through NUP60. Interacts with KAP122. Phosphorylated by CDC28.

The protein resides in the nucleus. It localises to the nuclear pore complex. The protein localises to the nucleus membrane. Functions as a component of the nuclear pore complex (NPC). NPC components, collectively referred to as nucleoporins (NUPs), can play the role of both NPC structural components and of docking or interaction partners for transiently associated nuclear transport factors. Active directional transport is assured by both, a Phe-Gly (FG) repeat affinity gradient for these transport factors across the NPC and a transport cofactor concentration gradient across the nuclear envelope (GSP1 and GSP2 GTPases associated predominantly with GTP in the nucleus, with GDP in the cytoplasm). As one of the FG repeat nucleoporins NUP1 is involved in interactions with and guidance of nuclear transport receptors such as SRP1-KAP95 (importin alpha and beta) through the NPC. Like the closely related NUP2 it also plays an important role in disassembling and recycling SRP1-KAP95 to the cytoplasm after nuclear import. Upon entry of the heterotrimeric SRP1-KAP95-cargo complex in the nucleus, NUP1 binds through its C-terminus to KAP95, thus accelerating the release of KAP95 and, indirectly, of the nuclear localization signal (NLS)-containing cargo from the SRP1-KAP95-cargo complex. The chain is Nucleoporin NUP1 (NUP1) from Saccharomyces cerevisiae (strain ATCC 204508 / S288c) (Baker's yeast).